The following is a 260-amino-acid chain: Dynein regulatory complex subunit 6 (260 aa).

Residues 1 to 13 (MAPKKKGGGKKKK) are compositionally biased toward basic residues. The segment at 1–43 (MAPKKKGGGKKKKKDDGAEPPHDGSWERAVESGTWEKPVTDLP) is disordered. Over residues 14–30 (KDDGAEPPHDGSWERAV) the composition is skewed to basic and acidic residues.

The protein belongs to the DRC6 family. As to quaternary structure, component of the nexin-dynein regulatory complex (N-DRC).

It is found in the cytoplasm. Its subcellular location is the cytoskeleton. The protein resides in the flagellum axoneme. Functionally, component of the nexin-dynein regulatory complex (N-DRC), a key regulator of ciliary/flagellar motility which maintains the alignment and integrity of the distal axoneme and regulates microtubule sliding in motile axonemes. The polypeptide is Dynein regulatory complex subunit 6 (Chlamydomonas reinhardtii (Chlamydomonas smithii)).